A 1370-amino-acid chain; its full sequence is DNA-directed RNA polymerase subunit beta (1370 aa).

It belongs to the RNA polymerase beta chain family. In terms of assembly, the RNAP catalytic core consists of 2 alpha, 1 beta, 1 beta' and 1 omega subunit. When a sigma factor is associated with the core the holoenzyme is formed, which can initiate transcription.

It catalyses the reaction RNA(n) + a ribonucleoside 5'-triphosphate = RNA(n+1) + diphosphate. In terms of biological role, DNA-dependent RNA polymerase catalyzes the transcription of DNA into RNA using the four ribonucleoside triphosphates as substrates. This is DNA-directed RNA polymerase subunit beta from Polaromonas naphthalenivorans (strain CJ2).